A 514-amino-acid chain; its full sequence is 2,3-bisphosphoglycerate-independent phosphoglycerate mutase (514 aa).

Residues D14 and S64 each coordinate Mn(2+). The Phosphoserine intermediate role is filled by S64. Substrate is bound by residues H125, 155–156 (RD), R187, R193, 263–266 (RADR), and K337. Mn(2+) contacts are provided by D404, H408, D445, H446, and H464.

Belongs to the BPG-independent phosphoglycerate mutase family. In terms of assembly, monomer. Requires Mn(2+) as cofactor.

The catalysed reaction is (2R)-2-phosphoglycerate = (2R)-3-phosphoglycerate. It participates in carbohydrate degradation; glycolysis; pyruvate from D-glyceraldehyde 3-phosphate: step 3/5. Its function is as follows. Catalyzes the interconversion of 2-phosphoglycerate and 3-phosphoglycerate. This Serratia proteamaculans (strain 568) protein is 2,3-bisphosphoglycerate-independent phosphoglycerate mutase.